Consider the following 298-residue polypeptide: uncharacterized protein (298 aa).

This is an uncharacterized protein from Methanocaldococcus jannaschii (strain ATCC 43067 / DSM 2661 / JAL-1 / JCM 10045 / NBRC 100440) (Methanococcus jannaschii).